We begin with the raw amino-acid sequence, 359 residues long: 4-hydroxy-3-methylbut-2-en-1-yl diphosphate synthase (flavodoxin) (359 aa).

C264, C267, C299, and E306 together coordinate [4Fe-4S] cluster.

The protein belongs to the IspG family. [4Fe-4S] cluster serves as cofactor.

The enzyme catalyses (2E)-4-hydroxy-3-methylbut-2-enyl diphosphate + oxidized [flavodoxin] + H2O + 2 H(+) = 2-C-methyl-D-erythritol 2,4-cyclic diphosphate + reduced [flavodoxin]. The protein operates within isoprenoid biosynthesis; isopentenyl diphosphate biosynthesis via DXP pathway; isopentenyl diphosphate from 1-deoxy-D-xylulose 5-phosphate: step 5/6. Functionally, converts 2C-methyl-D-erythritol 2,4-cyclodiphosphate (ME-2,4cPP) into 1-hydroxy-2-methyl-2-(E)-butenyl 4-diphosphate. The polypeptide is 4-hydroxy-3-methylbut-2-en-1-yl diphosphate synthase (flavodoxin) (Helicobacter pylori (strain G27)).